The sequence spans 718 residues: Nucleolar protein 11 (718 aa).

Lys-346 bears the N6-methyllysine mark.

As to quaternary structure, interacts with UTP4. Interacts with FBL/fibrillarin in a transcription-dependent manner. May associate with the proposed t-UTP subcomplex of the SSU processome containing at least UTP4, WDR43, HEATR1, UTP15, WDR75.

It is found in the nucleus. The protein resides in the nucleolus. Its function is as follows. Ribosome biogenesis factor. May be required for both optimal rDNA transcription and small subunit (SSU) pre-rRNA processing at sites A', A0, 1 and 2b. This is Nucleolar protein 11 (NOL11) from Pongo abelii (Sumatran orangutan).